The chain runs to 37 residues: Islet amyloid polypeptide (37 aa).

A disulfide bridge connects residues cysteine 2 and cysteine 7. A Tyrosine amide modification is found at tyrosine 37.

The protein belongs to the calcitonin family. Can form homodimers. Interacts with IDE and INS. Interaction with INS inhibits homodimerization and fibril formation.

The protein resides in the secreted. Its function is as follows. Amylin/IAPP is a glucoregulatory peptide hormone that plays an important role in the regulation of energy homeostasis. Selectively inhibits insulin-stimulated glucose utilization and glycogen deposition in muscle, while not affecting adipocyte glucose metabolism. IAPP function is mediated by the CALCR-RAMPs (AMYRs) receptor complexes. Amylin can also bind CALCR receptor in the absence of RAMPs, although it is more selective for AMYRs. This Cricetulus griseus (Chinese hamster) protein is Islet amyloid polypeptide (IAPP).